The sequence spans 418 residues: Ceramide synthase LAC1 (418 aa).

Residues 1–14 show a composition bias toward polar residues; the sequence is MSTIKPSPSNNNLK. The tract at residues 1-25 is disordered; that stretch reads MSTIKPSPSNNNLKVRSRPRRKSSI. Residue Ser-2 is modified to N-acetylserine. Residues 2–81 lie on the Cytoplasmic side of the membrane; that stretch reads STIKPSPSNN…WFSFREISYR (80 aa). Residues 15 to 24 show a composition bias toward basic residues; sequence VRSRPRRKSS. Residues Ser-23 and Ser-24 each carry the phosphoserine modification. Residues 82 to 102 form a helical membrane-spanning segment; it reads HAWIAPLMILIAVYSAYFTSG. A glycan (N-linked (GlcNAc...) asparagine) is linked at Asn-103. Residues 103–130 are Lumenal-facing; sequence NTTKTNVLHRFVAVSYQIGDTNAYGKGI. The chain crosses the membrane as a helical span at residues 131–155; the sequence is NDLCFVFYYMIFFTFLREFLMDVVI. Topologically, residues 156 to 172 are cytoplasmic; the sequence is RPFAIRLHVTSKHRIKR. The 218-residue stretch at 168-385 folds into the TLC domain; sequence HRIKRIMEQM…FRVLYRILWR (218 aa). Fumonisin B1 contacts are provided by Arg-169, Arg-172, and Tyr-182. The chain crosses the membrane as a helical span at residues 173 to 194; that stretch reads IMEQMYAIFYTGVSGPFGIYCM. The Lumenal portion of the chain corresponds to 195 to 217; the sequence is YHSDLWFFNTKAMYRTYPDFTNP. A helical transmembrane segment spans residues 218-240; that stretch reads FLFKVFYLGQAAFWAQQACILVL. Hexacosanoate is bound by residues Tyr-224 and Trp-231. Trp-231 provides a ligand contact to fumonisin B1. Residue Trp-231 participates in hexacosanoyl-CoA binding. At 241-249 the chain is on the cytoplasmic side; sequence QLEKPRKDH. The helical transmembrane segment at 250-268 threads the bilayer; that stretch reads NELTFHHIVTLLLIWSSYV. A fumonisin B1-binding site is contributed by His-255. Residues His-255, Thr-259, Leu-262, Ile-263, Ser-265, Ser-266, Phe-269, Phe-271, Met-274, Gly-275, Ile-278, Tyr-279, Met-282, Asp-283, and Asp-286 each contribute to the hexacosanoate site. 3 residues coordinate hexacosanoyl-CoA: His-255, Thr-259, and Leu-262. Hexacosanoyl-CoA is bound by residues Ser-265 and Ser-266. Residues 269-273 lie on the Lumenal side of the membrane; the sequence is FHFTK. Hexacosanoyl-CoA is bound by residues Phe-271, Met-274, Gly-275, Ile-278, Tyr-279, and Met-282. The helical transmembrane segment at 274–295 threads the bilayer; that stretch reads MGLPIYITMDVSDFLLSFSKTL. 9 residues coordinate fumonisin B1: Asp-286, Leu-289, Lys-293, Asn-296, Tyr-297, Ala-303, Phe-304, Phe-307, and Trp-314. Hexacosanoyl-CoA-binding residues include Asp-286, Leu-289, Lys-293, and Asn-296. Topologically, residues 296 to 305 are cytoplasmic; that stretch reads NYLDSGLAFF. A helical membrane pass occupies residues 306 to 334; it reads SFAIFVVAWIYLRHYINLKILWSVLTQFR. Phe-307 is a binding site for hexacosanoyl-CoA. Arg-318, Phe-343, Tyr-348, Ile-352, Ser-353, Ile-356, Val-357, Leu-360, Ile-361, and Trp-371 together coordinate hexacosanoate. Arg-318 lines the hexacosanoyl-CoA pocket. Over 335-353 the chain is Lumenal; it reads TEGNYVLNFATQQYKCWIS. Hexacosanoyl-CoA contacts are provided by Tyr-348, Ile-352, Ser-353, Ile-356, Val-357, and Leu-360. A helical membrane pass occupies residues 354-382; that stretch reads LPIVFVLIGALQLVNLYWLFLIFRVLYRI. Residues Trp-371, Ile-375, Val-378, Ile-382, and Arg-385 each contribute to the fumonisin B1 site. Trp-371 is a binding site for hexacosanoyl-CoA. Over 383 to 418 the chain is Cytoplasmic; that stretch reads LWRGILKDDRSDSESDEESDESSTTPTDSTPTKKDI. A disordered region spans residues 390-418; that stretch reads DDRSDSESDEESDESSTTPTDSTPTKKDI.

Belongs to the sphingosine N-acyltransferase family. As to quaternary structure, component of the ceramide synthase complex composed of at least LAC1, LAG1 and LIP1. Forms a heterotetrameric complex, where one unit of the LIP1 homodimer interacts with LAC1 and the other with either LAC1 or LAG1. Phosphorylated; phosphorylation is induced upon disruption of sphingolipid synthesis. Phosphorylation is inhibited by exogenous addition of phytosphingosine.

The protein resides in the endoplasmic reticulum membrane. The catalysed reaction is a very long-chain fatty acyl-CoA + a sphingoid base = an N-(very-long-chain fatty acyl)-sphingoid base + CoA + H(+). It carries out the reaction hexacosanoyl-CoA + sphinganine = N-hexacosanoylsphinganine + CoA + H(+). It catalyses the reaction eicosanoyl-CoA + sphinganine = N-eicosanoylsphinganine + CoA + H(+). The enzyme catalyses a fatty acyl-CoA + sphinganine = an N-acylsphinganine + CoA + H(+). The catalysed reaction is (4R)-hydroxysphinganine + a fatty acyl-CoA = an N-acyl-(4R)-4-hydroxysphinganine + CoA + H(+). The protein operates within lipid metabolism; sphingolipid metabolism. Its activity is regulated as follows. As part of the ceramide synthase complex, inhibited by the sphinganine analog mycotoxin, fumonisin B1 (FB1). Activated by ACB1, as part of the ceramide synthase complex. Its function is as follows. Component of the ceramide synthase complex that catalyzes the transfer of the acyl chain from acyl-CoA to a sphingoid base, with high selectivity toward hexacosanoyl-CoA (C26:0-CoA). N-acylates sphinganine and phytosphingosine bases to form dihydroceramides and phytoceramides, respectively. Redundant with LAG1. Facilitates ER-to-Golgi transport of GPI-anchored proteins. Has a lower affinity for phytosphingosine (PHS) than dihydrosphingosine (DHS); PHS is required for the synthesis of phytoceramides and the formation of nuclear envelopes. Along with LAG1, plays a role in pheromone-induced MAP kinase-activation of mating and formation of diploid cells. May also play a role, together with LAG1, in the polarized membrane distribution of phosphatidylinositol 4,5 biphosphate required for STE5 localization to the plasma membrane. The sequence is that of Ceramide synthase LAC1 (LAC1) from Saccharomyces cerevisiae (strain ATCC 204508 / S288c) (Baker's yeast).